The primary structure comprises 382 residues: Mannitol-1-phosphate 5-dehydrogenase (382 aa).

Residue 3–14 (ALHFGAGNIGRG) participates in NAD(+) binding.

This sequence belongs to the mannitol dehydrogenase family.

The catalysed reaction is D-mannitol 1-phosphate + NAD(+) = beta-D-fructose 6-phosphate + NADH + H(+). This is Mannitol-1-phosphate 5-dehydrogenase (mtlD) from Klebsiella pneumoniae.